The primary structure comprises 58 residues: Large ribosomal subunit protein uL30 (58 aa).

The protein belongs to the universal ribosomal protein uL30 family. Part of the 50S ribosomal subunit.

The chain is Large ribosomal subunit protein uL30 from Acinetobacter baylyi (strain ATCC 33305 / BD413 / ADP1).